Consider the following 678-residue polypeptide: Protein CASP (678 aa).

The Cytoplasmic segment spans residues 1 to 619; sequence MAANVGSMSQ…LILSNKTART (619 aa). 4 coiled-coil regions span residues 16-40, 67-374, 427-454, and 502-556; these read DLQQ…ESEQ, LLKS…TLKS, HLTE…TIQS, and LSII…FLQS. Position 586 is a phosphoserine (Ser-586). Residues 620 to 640 traverse the membrane as a helical; Anchor for type IV membrane protein segment; sequence IGFFYTLFLHCLVFLVLYKLA. Over 641-678 the chain is Lumenal; sequence WSESVERDCAATCAKKFADHLHKFHESDNGAAAGDLWQ.

The protein belongs to the CASP family. In terms of assembly, homodimer; disulfide-linked. Interacts with GOLGA5. In terms of tissue distribution, ubiquitously expressed.

Its subcellular location is the golgi apparatus membrane. In terms of biological role, may be involved in intra-Golgi retrograde transport. The sequence is that of Protein CASP (Cux1) from Mus musculus (Mouse).